The following is a 69-amino-acid chain: Cell division protein ZapB (69 aa).

The stretch at 3-60 (LELFNQLEQKVQNAVETIEMLKMEAEELREENTRLKQERDEWERRLNGLLGKFQEIED) forms a coiled coil.

It belongs to the ZapB family. In terms of assembly, homodimer. The ends of the coiled-coil dimer bind to each other, forming polymers. Interacts with FtsZ.

It localises to the cytoplasm. Non-essential, abundant cell division factor that is required for proper Z-ring formation. It is recruited early to the divisome by direct interaction with FtsZ, stimulating Z-ring assembly and thereby promoting cell division earlier in the cell cycle. Its recruitment to the Z-ring requires functional FtsA or ZipA. The protein is Cell division protein ZapB of Chromohalobacter salexigens (strain ATCC BAA-138 / DSM 3043 / CIP 106854 / NCIMB 13768 / 1H11).